The chain runs to 232 residues: uncharacterized protein (232 aa).

Transmembrane regions (helical) follow at residues 4 to 24 (LLGV…YVFE), 42 to 62 (VLVG…LAVL), 100 to 120 (LFFI…ILHM), 145 to 165 (LAFV…FFTL), and 171 to 191 (GNLI…WVGF).

It localises to the cell membrane. This is an uncharacterized protein from Aquifex aeolicus (strain VF5).